Consider the following 89-residue polypeptide: Defensin-like protein 78 (89 aa).

The first 30 residues, Met-1–Ala-30, serve as a signal peptide directing secretion. Disulfide bonds link Cys-40-Cys-75, Cys-44-Cys-67, Cys-52-Cys-73, and Cys-56-Cys-74.

This sequence belongs to the DEFL family.

The protein resides in the secreted. This chain is Defensin-like protein 78, found in Arabidopsis thaliana (Mouse-ear cress).